The following is a 570-amino-acid chain: Hydroxylamine reductase (570 aa).

Residues C5, C8, C17, and C23 each coordinate [4Fe-4S] cluster. Residues H266, E290, C334, C425, C453, C478, E513, and K515 each contribute to the hybrid [4Fe-2O-2S] cluster site. C425 bears the Cysteine persulfide mark.

This sequence belongs to the HCP family. [4Fe-4S] cluster serves as cofactor. Hybrid [4Fe-2O-2S] cluster is required as a cofactor.

It is found in the cytoplasm. The catalysed reaction is A + NH4(+) + H2O = hydroxylamine + AH2 + H(+). Catalyzes the reduction of hydroxylamine to form NH(3) and H(2)O. This Clostridium botulinum (strain Langeland / NCTC 10281 / Type F) protein is Hydroxylamine reductase.